Consider the following 367-residue polypeptide: Developmentally-regulated GTP-binding protein 1 (367 aa).

S2 bears the N-acetylserine mark. A required for interaction with STK16 region spans residues S2–A16. K22 bears the (3S)-3-hydroxylysine mark. Positions A65–K290 constitute an OBG-type G domain. Residues G71–S78, F96–T100, D117–G120, N248–D251, and S271–H273 each bind GTP. S78 and T98 together coordinate Mg(2+). At T100 the chain carries Phosphothreonine; by STK16. The TGS domain occupies K290 to K366.

This sequence belongs to the TRAFAC class OBG-HflX-like GTPase superfamily. OBG GTPase family. Interacts (via its C-terminal) with TAL1. Interacts with DFRP1/ZC3H15; this interaction prevents DRG1 poly-ubiquitination and degradation by proteasome. DRG1-ZC3H15/DFRP1 complex co-sediments with polysomes. Interacts with STK16. Interacts with JMJD7. Sumoylated by UBE2I in response to MEKK1-mediated stimuli. In terms of processing, hydroxylated (with S stereochemistry) at C-3 of Lys-22 by JMJD7. Post-translationally, phosphorylated at Thr-100 by STK16. Polyubiquitinated; this modification induces proteolytic degradation and is impaired by interaction with ZC3H15.

It localises to the nucleus. Its subcellular location is the cytoplasm. The catalysed reaction is GTP + H2O = GDP + phosphate + H(+). Its activity is regulated as follows. The GTPase activity is enhanced by potassium ions as well as by DFRP1 binding. Catalyzes the conversion of GTP to GDP through hydrolysis of the gamma-phosphate bond in GTP. Appears to have an intrinsic GTPase activity that is stimulated by ZC3H15/DFRP1 binding likely by increasing the affinity for the potassium ions. When hydroxylated at C-3 of 'Lys-22' by JMJD7, may bind to RNA and play a role in translation. Binds to microtubules and promotes microtubule polymerization and bundling that are required for mitotic spindle assembly during prophase to anaphase transition. GTPase activity is not necessary for these microtubule-related functions. The chain is Developmentally-regulated GTP-binding protein 1 (DRG1) from Bos taurus (Bovine).